The chain runs to 97 residues: Bacterial microcompartment shell protein EutM (97 aa).

The region spanning 3–87 is the BMC domain; it reads ALGMIETRGL…PHGDLEEVFP (85 aa).

This sequence belongs to the bacterial microcompartments protein family. Homohexamer with a central pore of up to 8.6 Angstroms diameter. The hexamers pack into a two-dimensional array. Interacts with EutQ.

It localises to the bacterial microcompartment. It functions in the pathway amine and polyamine degradation; ethanolamine degradation. Functionally, probably a major component of the bacterial microcompartment (BMC) shell dedicated to ethanolamine degradation. Each homohexamer has a central pore with an opening of up to 8.6 Angstroms. A positively-charged funnel leads to the pore from each side of the hexamer. The pore probably allows metabolite passage into and out of the BMC. This is Bacterial microcompartment shell protein EutM (eutM) from Escherichia coli O6:H1 (strain CFT073 / ATCC 700928 / UPEC).